We begin with the raw amino-acid sequence, 355 residues long: Countin-like protein (355 aa).

The N-terminal stretch at 1-27 (MNKSLFSLILLIITIFNLASNINIVSA) is a signal peptide. The interval 63–83 (NNHEDNNNNNNNNNNNNNAYN) is disordered. A compositionally biased stretch (low complexity) spans 69 to 83 (NNNNNNNNNNNNAYN). The 85-residue stretch at 93–177 (GDIECVVCLD…ELITACSTPK (85 aa)) folds into the Saposin B-type domain. Intrachain disulfides connect Cys-97–Cys-173, Cys-100–Cys-167, and Cys-128–Cys-140. Asn-132, Asn-209, Asn-242, Asn-253, Asn-254, Asn-282, and Asn-303 each carry an N-linked (GlcNAc...) asparagine glycan. Positions 290–355 (ISNPTPTPTP…SSHYKNKINK (66 aa)) are disordered. A compositionally biased stretch (low complexity) spans 301 to 342 (PSNSTTPTPTPTNSTPTPTSTSTPTSTPTSTPTPTPTSSSST). Residues 345–355 (HSSHYKNKINK) show a composition bias toward basic residues.

This sequence belongs to the countin family.

Its subcellular location is the secreted. The sequence is that of Countin-like protein from Dictyostelium discoideum (Social amoeba).